Reading from the N-terminus, the 379-residue chain is Inositol 3-kinase (379 aa).

ATP contacts are provided by residues serine 217, 267–270 (GAGD), and asparagine 294. Residue aspartate 270 is the Proton acceptor of the active site.

This sequence belongs to the carbohydrate kinase pfkB family.

It carries out the reaction myo-inositol + ATP = 1D-myo-inositol 3-phosphate + ADP + H(+). Functionally, kinase that phosphorylates myo-inositol to produce multiple myo-inositol monophosphates, Ins(1)P, Ins(3)P, Ins(4)P, Ins(5)P and Ins(6)P. Participates in phytic acid biosynthesis in developing seeds. Phytic acid is the primary storage form of phosphorus in cereal grains and other plant seeds. This chain is Inositol 3-kinase, found in Zea mays (Maize).